A 371-amino-acid chain; its full sequence is Leucine-rich repeat-containing protein 2 (371 aa).

LRR repeat units follow at residues H122–F143, A145–L166, N168–C189, N191–K214, Q215–R235, N238–E260, E261–K283, K284–S305, and P308–E329.

The polypeptide is Leucine-rich repeat-containing protein 2 (LRRC2) (Homo sapiens (Human)).